Here is a 558-residue protein sequence, read N- to C-terminus: Arginine--tRNA ligase (558 aa).

The 'HIGH' region signature appears at 119–129 (ANPDGPLHVGH).

It belongs to the class-I aminoacyl-tRNA synthetase family.

Its subcellular location is the cytoplasm. The catalysed reaction is tRNA(Arg) + L-arginine + ATP = L-arginyl-tRNA(Arg) + AMP + diphosphate. The chain is Arginine--tRNA ligase from Methanothrix thermoacetophila (strain DSM 6194 / JCM 14653 / NBRC 101360 / PT) (Methanosaeta thermophila).